We begin with the raw amino-acid sequence, 416 residues long: Probable glucan 1,3-beta-glucosidase A (416 aa).

An N-terminal signal peptide occupies residues 1–22 (MIFKFSQKALVALYLVVGLAEA). Residue Glu211 is the Proton donor of the active site. 2 cysteine pairs are disulfide-bonded: Cys291–Cys415 and Cys316–Cys342. Glu308 serves as the catalytic Nucleophile. N-linked (GlcNAc...) asparagine glycosylation is present at Asn344.

It belongs to the glycosyl hydrolase 5 (cellulase A) family. As to quaternary structure, monomer. Requires Mn(2+) as cofactor.

The protein localises to the secreted. The enzyme catalyses Successive hydrolysis of beta-D-glucose units from the non-reducing ends of (1-&gt;3)-beta-D-glucans, releasing alpha-glucose.. In terms of biological role, beta-glucanases participate in the metabolism of beta-glucan, the main structural component of the cell wall. It could also function biosynthetically as a transglycosylase. This Aspergillus fumigatus (strain CBS 144.89 / FGSC A1163 / CEA10) (Neosartorya fumigata) protein is Probable glucan 1,3-beta-glucosidase A (exgA).